The primary structure comprises 382 residues: uncharacterized protein (382 aa).

12 helical membrane-spanning segments follow: residues 14-34, 45-65, 79-99, 102-122, 131-151, 157-177, 204-224, 235-255, 270-290, 291-311, 325-345, and 348-368; these read GLLLLTLAIAVLNTLVPLWLA, VVSSSYFTGNLVGTLLTGYVI, FIFAAGCAGLGLMIGFWSWLA, FVAGVGCAMIWVVVESALMCS, LLAAYMMVYYVGTFLGQLLVS, LMSVLPWVTGLTLAGILPLLF, LGVNGCIISGIVLGSLYGLMP, ASIGFWMAVLVSAGILGQWPI, VQVFVVILGSIAMLSQAAMAP, ALFILGAAGFTLYPVAMAWAC, ALLLSYTVGSLLGPSFTAMLM, and FSDNLLFIMIASVSFIYLLML.

Belongs to the major facilitator superfamily. YcaD (TC 2.A.1.26) family.

Its subcellular location is the cell inner membrane. This is an uncharacterized protein from Shigella dysenteriae serotype 1 (strain Sd197).